Reading from the N-terminus, the 147-residue chain is Large ribosomal subunit protein uL15 (147 aa).

The disordered stretch occupies residues 1–62; it reads MDLSNLRPAI…GQMPLQRRLP (62 aa). Composition is skewed to gly residues over residues 21 to 31 and 42 to 52; these read RGPGSGNGKTA and SGGGVKPGFEG.

Belongs to the universal ribosomal protein uL15 family. Part of the 50S ribosomal subunit.

Functionally, binds to the 23S rRNA. In Syntrophotalea carbinolica (strain DSM 2380 / NBRC 103641 / GraBd1) (Pelobacter carbinolicus), this protein is Large ribosomal subunit protein uL15.